The following is a 156-amino-acid chain: Gene 55 protein (156 aa).

A disordered region spans residues 132–156 (KRRWSGGNASSHEERMRGPFTEVAE).

The chain is Gene 55 protein (55) from Mycobacterium phage L5 (Mycobacteriophage L5).